A 284-amino-acid polypeptide reads, in one-letter code: tRNA (guanine-N(7)-)-methyltransferase (284 aa).

Residues Gly102, 125–126 (EI), 160–161 (NT), and Cys180 each bind S-adenosyl-L-methionine. Asp183 is a catalytic residue. Residue 258–260 (TEE) participates in S-adenosyl-L-methionine binding.

This sequence belongs to the class I-like SAM-binding methyltransferase superfamily. TrmB family. Forms a complex with TRM82.

Its subcellular location is the nucleus. The catalysed reaction is guanosine(46) in tRNA + S-adenosyl-L-methionine = N(7)-methylguanosine(46) in tRNA + S-adenosyl-L-homocysteine. The protein operates within tRNA modification; N(7)-methylguanine-tRNA biosynthesis. Functionally, catalyzes the formation of N(7)-methylguanine at position 46 (m7G46) in tRNA. The chain is tRNA (guanine-N(7)-)-methyltransferase from Podospora anserina (strain S / ATCC MYA-4624 / DSM 980 / FGSC 10383) (Pleurage anserina).